A 136-amino-acid chain; its full sequence is ATP synthase epsilon chain (136 aa).

Belongs to the ATPase epsilon chain family. In terms of assembly, F-type ATPases have 2 components, CF(1) - the catalytic core - and CF(0) - the membrane proton channel. CF(1) has five subunits: alpha(3), beta(3), gamma(1), delta(1), epsilon(1). CF(0) has three main subunits: a, b and c.

Its subcellular location is the cell membrane. In terms of biological role, produces ATP from ADP in the presence of a proton gradient across the membrane. In Herpetosiphon aurantiacus (strain ATCC 23779 / DSM 785 / 114-95), this protein is ATP synthase epsilon chain.